The following is an 84-amino-acid chain: Large ribosomal subunit protein bL27 (84 aa).

Positions 1 to 21 (MAHKKGVGSSRNGRDSDGQRL) are disordered.

It belongs to the bacterial ribosomal protein bL27 family.

The sequence is that of Large ribosomal subunit protein bL27 from Trichlorobacter lovleyi (strain ATCC BAA-1151 / DSM 17278 / SZ) (Geobacter lovleyi).